Consider the following 33-residue polypeptide: Pardaxin P-1 (33 aa).

Belongs to the pardaxin family. As to quaternary structure, in aqueous solution exists as a tetramer.

Its subcellular location is the secreted. It localises to the target cell membrane. Its function is as follows. Exhibits unusual shark repellent and surfactant properties. Forms voltage-dependent, ion-permeable channels in membranes. At high concentration causes cell membrane lysis. Causes death in killfish oryzias latipes in 30 minutes at a concentration of 25 micrograms/ml. This is Pardaxin P-1 from Pardachirus pavoninus (Peacock sole).